Reading from the N-terminus, the 858-residue chain is Translation initiation factor IF-2 (858 aa).

Residues 59 to 147 (KEHAEKRRER…GKKLEGQERK (89 aa)) are disordered. The tr-type G domain maps to 361–530 (PRPPVVVVMG…LLVADLLELK (170 aa)). Positions 370 to 377 (GHVDHGKT) are G1. Residue 370–377 (GHVDHGKT) participates in GTP binding. Positions 395-399 (GITQH) are G2. A G3 region spans residues 416–419 (DTPG). GTP contacts are provided by residues 416-420 (DTPGH) and 470-473 (NKID). The interval 470 to 473 (NKID) is G4. The interval 506–508 (SAK) is G5.

Belongs to the TRAFAC class translation factor GTPase superfamily. Classic translation factor GTPase family. IF-2 subfamily.

It localises to the cytoplasm. One of the essential components for the initiation of protein synthesis. Protects formylmethionyl-tRNA from spontaneous hydrolysis and promotes its binding to the 30S ribosomal subunits. Also involved in the hydrolysis of GTP during the formation of the 70S ribosomal complex. The sequence is that of Translation initiation factor IF-2 from Caldicellulosiruptor saccharolyticus (strain ATCC 43494 / DSM 8903 / Tp8T 6331).